Reading from the N-terminus, the 145-residue chain is Basic phospholipase A2 S6-45 (145 aa).

Positions 1–19 (MYPAHLLVLLAVCVSLLGA) are cleaved as a signal peptide. Positions 20–27 (SDIPPQPL) are excised as a propeptide. Disulfide bonds link Cys-38–Cys-99, Cys-54–Cys-144, Cys-56–Cys-72, Cys-71–Cys-127, Cys-78–Cys-120, Cys-88–Cys-113, and Cys-106–Cys-118. Residues Tyr-55, Gly-57, and Gly-59 each contribute to the Ca(2+) site. His-75 is an active-site residue. Position 76 (Asp-76) interacts with Ca(2+). The active site involves Asp-121.

The protein belongs to the phospholipase A2 family. Group I subfamily. D49 sub-subfamily. Ca(2+) serves as cofactor. As to expression, expressed by the venom gland.

The protein localises to the secreted. It catalyses the reaction a 1,2-diacyl-sn-glycero-3-phosphocholine + H2O = a 1-acyl-sn-glycero-3-phosphocholine + a fatty acid + H(+). In terms of biological role, snake venom phospholipase A2 (PLA2) that inhibits collagen-induced platelet aggregation. PLA2 catalyzes the calcium-dependent hydrolysis of the 2-acyl groups in 3-sn-phosphoglycerides. This chain is Basic phospholipase A2 S6-45, found in Austrelaps superbus (Lowland copperhead snake).